Consider the following 459-residue polypeptide: Bifunctional protein GlmU (459 aa).

Positions 1–229 (MTNYAIILAA…FDESLGVNDR (229 aa)) are pyrophosphorylase. UDP-N-acetyl-alpha-D-glucosamine-binding positions include 8 to 11 (LAAG), Lys-22, Gln-72, and 77 to 78 (GT). Asp-102 is a Mg(2+) binding site. Positions 139, 154, 169, and 227 each coordinate UDP-N-acetyl-alpha-D-glucosamine. Asn-227 lines the Mg(2+) pocket. A linker region spans residues 230–250 (VALATAESVMRRRINQKHMVN). The tract at residues 251-459 (GVSFVNPDAT…KRLPHHPQNK (209 aa)) is N-acetyltransferase. 2 residues coordinate UDP-N-acetyl-alpha-D-glucosamine: Arg-332 and Lys-350. The Proton acceptor role is filled by His-362. Positions 365 and 376 each coordinate UDP-N-acetyl-alpha-D-glucosamine. Residues Ala-379, 385–386 (NY), Ser-404, Ala-422, and Arg-439 contribute to the acetyl-CoA site.

It in the N-terminal section; belongs to the N-acetylglucosamine-1-phosphate uridyltransferase family. In the C-terminal section; belongs to the transferase hexapeptide repeat family. In terms of assembly, homotrimer. Mg(2+) serves as cofactor.

It localises to the cytoplasm. It carries out the reaction alpha-D-glucosamine 1-phosphate + acetyl-CoA = N-acetyl-alpha-D-glucosamine 1-phosphate + CoA + H(+). The enzyme catalyses N-acetyl-alpha-D-glucosamine 1-phosphate + UTP + H(+) = UDP-N-acetyl-alpha-D-glucosamine + diphosphate. Its pathway is nucleotide-sugar biosynthesis; UDP-N-acetyl-alpha-D-glucosamine biosynthesis; N-acetyl-alpha-D-glucosamine 1-phosphate from alpha-D-glucosamine 6-phosphate (route II): step 2/2. It functions in the pathway nucleotide-sugar biosynthesis; UDP-N-acetyl-alpha-D-glucosamine biosynthesis; UDP-N-acetyl-alpha-D-glucosamine from N-acetyl-alpha-D-glucosamine 1-phosphate: step 1/1. The protein operates within bacterial outer membrane biogenesis; LPS lipid A biosynthesis. Catalyzes the last two sequential reactions in the de novo biosynthetic pathway for UDP-N-acetylglucosamine (UDP-GlcNAc). The C-terminal domain catalyzes the transfer of acetyl group from acetyl coenzyme A to glucosamine-1-phosphate (GlcN-1-P) to produce N-acetylglucosamine-1-phosphate (GlcNAc-1-P), which is converted into UDP-GlcNAc by the transfer of uridine 5-monophosphate (from uridine 5-triphosphate), a reaction catalyzed by the N-terminal domain. The protein is Bifunctional protein GlmU of Streptococcus gordonii (strain Challis / ATCC 35105 / BCRC 15272 / CH1 / DL1 / V288).